The chain runs to 524 residues: Protein hunchback (524 aa).

Disordered stretches follow at residues 42–86 (IVKR…PQTQ) and 101–187 (YNHN…DEQS). Over residues 59 to 75 (SGSDFHSSSPSSDTSQD) the composition is skewed to low complexity. Over residues 76–86 (LQHSYQSPQTQ) the composition is skewed to polar residues. Composition is skewed to basic and acidic residues over residues 118–127 (KSEKEEKDME), 138–154 (RKPD…EMSL), and 164–178 (TSEH…KSDN). 4 consecutive C2H2-type zinc fingers follow at residues 202–224 (FKCK…SKVH), 231–253 (LTCP…LRNH), 259–281 (FQCN…MKSH), and 298–311 (YCHS…RYGH). Residues 402–442 (DLSKPGCSYTGEQKSRRKGPAFKVDPTQVESEEEDEETSTT) form a disordered region. C2H2-type zinc fingers lie at residues 471–493 (NSCQ…MGYH) and 499–523 (FTCN…RVSH).

This sequence belongs to the hunchback C2H2-type zinc-finger protein family.

The protein localises to the nucleus. Its function is as follows. Gap class segmentation protein that controls development of head structures. The polypeptide is Protein hunchback (hb) (Tribolium castaneum (Red flour beetle)).